Consider the following 62-residue polypeptide: Conotoxin Gm5.2 (62 aa).

Positions 1–22 are cleaved as a signal peptide; the sequence is MRCLPVFVILLLLIASAPSVDA. The propeptide occupies 23–49; it reads QPKTKDDVPLAPLHDNIRSTLQTLRKK. At Ser-60 the chain carries Serine amide.

It belongs to the conotoxin T superfamily. Contains 2 disulfide bonds that can be either 'C1-C3, C2-C4' or 'C1-C4, C2-C3', since these disulfide connectivities have been observed for conotoxins with cysteine framework V (for examples, see AC P0DQQ7 and AC P81755). In terms of tissue distribution, expressed by the venom duct.

The protein resides in the secreted. The polypeptide is Conotoxin Gm5.2 (Conus gloriamaris (Glory-of-the-Sea cone)).